A 152-amino-acid polypeptide reads, in one-letter code: Large ribosomal subunit protein bL9 (152 aa).

The protein belongs to the bacterial ribosomal protein bL9 family.

Its function is as follows. Binds to the 23S rRNA. This is Large ribosomal subunit protein bL9 from Synechocystis sp. (strain ATCC 27184 / PCC 6803 / Kazusa).